Here is a 192-residue protein sequence, read N- to C-terminus: Peptidyl-tRNA hydrolase (192 aa).

TRNA is bound at residue Tyr18. The active-site Proton acceptor is the His23. Residues Phe69, Asn71, and Asn117 each contribute to the tRNA site.

The protein belongs to the PTH family. In terms of assembly, monomer.

The protein resides in the cytoplasm. It carries out the reaction an N-acyl-L-alpha-aminoacyl-tRNA + H2O = an N-acyl-L-amino acid + a tRNA + H(+). Functionally, hydrolyzes ribosome-free peptidyl-tRNAs (with 1 or more amino acids incorporated), which drop off the ribosome during protein synthesis, or as a result of ribosome stalling. In terms of biological role, catalyzes the release of premature peptidyl moieties from peptidyl-tRNA molecules trapped in stalled 50S ribosomal subunits, and thus maintains levels of free tRNAs and 50S ribosomes. This Neisseria meningitidis serogroup A / serotype 4A (strain DSM 15465 / Z2491) protein is Peptidyl-tRNA hydrolase.